Consider the following 308-residue polypeptide: Aspartate carbamoyltransferase catalytic subunit (308 aa).

Residues Arg57 and Thr58 each contribute to the carbamoyl phosphate site. Lys86 is an L-aspartate binding site. Arg107, His135, and Gln138 together coordinate carbamoyl phosphate. Positions 168 and 229 each coordinate L-aspartate. Leu268 and Pro269 together coordinate carbamoyl phosphate.

The protein belongs to the aspartate/ornithine carbamoyltransferase superfamily. ATCase family. In terms of assembly, heterooligomer of catalytic and regulatory chains.

It carries out the reaction carbamoyl phosphate + L-aspartate = N-carbamoyl-L-aspartate + phosphate + H(+). Its pathway is pyrimidine metabolism; UMP biosynthesis via de novo pathway; (S)-dihydroorotate from bicarbonate: step 2/3. Its function is as follows. Catalyzes the condensation of carbamoyl phosphate and aspartate to form carbamoyl aspartate and inorganic phosphate, the committed step in the de novo pyrimidine nucleotide biosynthesis pathway. The polypeptide is Aspartate carbamoyltransferase catalytic subunit (Thermococcus gammatolerans (strain DSM 15229 / JCM 11827 / EJ3)).